The primary structure comprises 132 residues: ATP synthase epsilon chain, chloroplastic (132 aa).

The protein belongs to the ATPase epsilon chain family. F-type ATPases have 2 components, CF(1) - the catalytic core - and CF(0) - the membrane proton channel. CF(1) has five subunits: alpha(3), beta(3), gamma(1), delta(1), epsilon(1). CF(0) has three main subunits: a, b and c.

It is found in the plastid. Its subcellular location is the chloroplast thylakoid membrane. Its function is as follows. Produces ATP from ADP in the presence of a proton gradient across the membrane. The chain is ATP synthase epsilon chain, chloroplastic from Adiantum capillus-veneris (Maidenhair fern).